The chain runs to 210 residues: Endo-1,4-beta-xylanase A (210 aa).

The signal sequence occupies residues 1-19; it reads MKLKKKMLTLLLTASMSFG. A GH11 domain is found at 20–210; the sequence is LFGATSSAAT…SSGRSNVTVW (191 aa). Glu104 serves as the catalytic Nucleophile. Glu197 functions as the Proton donor in the catalytic mechanism.

It belongs to the glycosyl hydrolase 11 (cellulase G) family.

It catalyses the reaction Endohydrolysis of (1-&gt;4)-beta-D-xylosidic linkages in xylans.. Its pathway is glycan degradation; xylan degradation. In Geobacillus stearothermophilus (Bacillus stearothermophilus), this protein is Endo-1,4-beta-xylanase A (xynA).